The chain runs to 292 residues: RNA 5'-monophosphate methyltransferase (292 aa).

The interval 1-22 (MAASTEQATGGVEKTAAEEKPR) is disordered. Residues arginine 46, asparagine 76, aspartate 110, 135–136 (DF), and methionine 164 contribute to the S-adenosyl-L-methionine site. Positions 53–274 (ELLRRLFPQS…KQATETHPIP (222 aa)) constitute a Bin3-type SAM domain.

Belongs to the methyltransferase superfamily. As to quaternary structure, interacts with DICER1; the interaction may be mediated by RNA.

Its subcellular location is the cytoplasm. It catalyses the reaction a 5'-end 5'-phospho-ribonucleoside-RNA + S-adenosyl-L-methionine = a 5'-end (5'-methylphospho)-ribonucleoside-RNA + S-adenosyl-L-homocysteine. It carries out the reaction a 5'-end 5'-phospho-ribonucleoside-RNA + 2 S-adenosyl-L-methionine = a 5'-end (5'-bismethylphospho)-ribonucleoside-RNA + 2 S-adenosyl-L-homocysteine. Its function is as follows. O-methyltransferase that specifically monomethylates 5'-monophosphate of cytoplasmic histidyl tRNA (tRNA(His)), acting as a capping enzyme by protecting tRNA(His) from cleavage by DICER1. Also able, with less efficiently, to methylate the 5' monophosphate of a subset of pre-miRNAs, acting as a negative regulator of miRNA processing. The 5' monophosphate of pre-miRNAs is recognized by DICER1 and is required for pre-miRNAs processing: methylation at this position reduces the processing of pre-miRNAs by DICER1. Was also reported to mediate dimethylation of pre-miR-145; however dimethylation cannot be reproduced by another group which observes a monomethylation of pre-miR-145. This Bos taurus (Bovine) protein is RNA 5'-monophosphate methyltransferase (BCDIN3D).